The sequence spans 87 residues: MKKAVLLATVFCGVVGLTSCCRIVDCCFEDPCAPKPCNPCGNKKDKGCSPCGVYTPSCSKPCGSECNPGVQGPQAKGCTSLDGRCKQ.

A signal peptide spans 1 to 19; the sequence is MKKAVLLATVFCGVVGLTS. Cys-20 carries N-palmitoyl cysteine lipidation. Cys-20 is lipidated: S-diacylglycerol cysteine.

As to quaternary structure, part of a disulfide cross-linked outer membrane complex (COMC) composed of the major outer membrane porin (MOMP), the small cysteine-rich protein (omcA) and the large cysteine-rich periplasmic protein (omcB). Post-translationally, N-terminal amide-linked and S-diacylglycerol cysteine-linked to 16:0, 18:0, 15:0 branched, and 17:0 branched fatty acids (ratio 6:5:3:4) in the EB stage. The exact distribution of fatty acids has not been determined. The N-terminus is blocked.

It localises to the cell outer membrane. Functionally, in elementary bodies (EBs, the infectious stage, which is able to survive outside the host cell) provides the structural integrity of the outer envelope through disulfide cross-links with the large cysteine-rich periplasmic protein and the major outer membrane porin. It has been described in publications as the Sarkosyl-insoluble COMC (Chlamydia outer membrane complex), and serves as the functional equivalent of peptidoglycan. This Chlamydia psittaci (Chlamydophila psittaci) protein is Small cysteine-rich outer membrane protein omcA (omcA).